Consider the following 138-residue polypeptide: RutC family protein UK114 (138 aa).

Belongs to the RutC family.

In terms of biological role, molecular chaperone. Seems to fulfill an ATP-independent, HSP70-like function in protein folding. May protect essential factors of cell proliferation during heat shock. No role in calpain activation. The chain is RutC family protein UK114 from Drosophila melanogaster (Fruit fly).